The chain runs to 326 residues: Undecaprenyl-phosphate 4-deoxy-4-formamido-L-arabinose transferase (326 aa).

Transmembrane regions (helical) follow at residues 235 to 255 and 270 to 290; these read MLSV…LLLI and VFML…GMGL.

It belongs to the glycosyltransferase 2 family.

The protein resides in the cell inner membrane. The enzyme catalyses UDP-4-deoxy-4-formamido-beta-L-arabinose + di-trans,octa-cis-undecaprenyl phosphate = 4-deoxy-4-formamido-alpha-L-arabinopyranosyl di-trans,octa-cis-undecaprenyl phosphate + UDP. It participates in glycolipid biosynthesis; 4-amino-4-deoxy-alpha-L-arabinose undecaprenyl phosphate biosynthesis; 4-amino-4-deoxy-alpha-L-arabinose undecaprenyl phosphate from UDP-4-deoxy-4-formamido-beta-L-arabinose and undecaprenyl phosphate: step 1/2. The protein operates within bacterial outer membrane biogenesis; lipopolysaccharide biosynthesis. In terms of biological role, catalyzes the transfer of 4-deoxy-4-formamido-L-arabinose from UDP to undecaprenyl phosphate. The modified arabinose is attached to lipid A and is required for resistance to polymyxin and cationic antimicrobial peptides. In Sodalis glossinidius (strain morsitans), this protein is Undecaprenyl-phosphate 4-deoxy-4-formamido-L-arabinose transferase.